We begin with the raw amino-acid sequence, 407 residues long: Argininosuccinate synthase (407 aa).

ATP-binding positions include alanine 16 to serine 24 and alanine 44. Residues tyrosine 96 and serine 101 each coordinate L-citrulline. An ATP-binding site is contributed by glycine 126. Threonine 128, asparagine 132, and aspartate 133 together coordinate L-aspartate. L-citrulline is bound at residue asparagine 132. Residues arginine 136, serine 185, serine 194, glutamate 270, and tyrosine 282 each contribute to the L-citrulline site.

It belongs to the argininosuccinate synthase family. Type 1 subfamily. In terms of assembly, homotetramer.

Its subcellular location is the cytoplasm. The enzyme catalyses L-citrulline + L-aspartate + ATP = 2-(N(omega)-L-arginino)succinate + AMP + diphosphate + H(+). It functions in the pathway amino-acid biosynthesis; L-arginine biosynthesis; L-arginine from L-ornithine and carbamoyl phosphate: step 2/3. The protein is Argininosuccinate synthase of Shewanella oneidensis (strain ATCC 700550 / JCM 31522 / CIP 106686 / LMG 19005 / NCIMB 14063 / MR-1).